Reading from the N-terminus, the 153-residue chain is Large-conductance mechanosensitive channel (153 aa).

Transmembrane regions (helical) follow at residues Val-16–Leu-36 and Gly-88–Val-108.

Belongs to the MscL family. In terms of assembly, homopentamer.

Its subcellular location is the cell inner membrane. Functionally, channel that opens in response to stretch forces in the membrane lipid bilayer. May participate in the regulation of osmotic pressure changes within the cell. This Chromobacterium violaceum (strain ATCC 12472 / DSM 30191 / JCM 1249 / CCUG 213 / NBRC 12614 / NCIMB 9131 / NCTC 9757 / MK) protein is Large-conductance mechanosensitive channel.